The sequence spans 335 residues: AA9 family lytic polysaccharide monooxygenase A (335 aa).

An N-terminal signal peptide occupies residues 1 to 21 (MSSFITKTVLAALVAAAGVRA). The Cu(2+) site is built by His-22 and His-107. Cys-77 and Cys-196 are joined by a disulfide. Residues His-182 and Gln-191 each contribute to the O2 site. Tyr-193 lines the Cu(2+) pocket. The disordered stretch occupies residues 241 to 335 (PKMNIAGGSS…ARRHARDMMN (95 aa)). Low complexity predominate over residues 251–303 (GAAPSTPATPTTGSGSDTPSNTAAPVESAPAESAAPVESAPAAGNGNQNNGGA). Residues 321–335 (CKAKKARRHARDMMN) are compositionally biased toward basic residues.

It belongs to the polysaccharide monooxygenase AA9 family. It depends on Cu(2+) as a cofactor.

It is found in the secreted. The enzyme catalyses [(1-&gt;4)-beta-D-glucosyl]n+m + reduced acceptor + O2 = 4-dehydro-beta-D-glucosyl-[(1-&gt;4)-beta-D-glucosyl]n-1 + [(1-&gt;4)-beta-D-glucosyl]m + acceptor + H2O.. In terms of biological role, lytic polysaccharide monooxygenase (LPMO) that depolymerizes crystalline and amorphous polysaccharides via the oxidation of scissile alpha- or beta-(1-4)-glycosidic bonds, yielding C1 or C4 oxidation products. Catalysis by LPMOs requires the reduction of the active-site copper from Cu(II) to Cu(I) by a reducing agent and H(2)O(2) or O(2) as a cosubstrate. Is capable of cleaving cellulose, but not chitin. Is also active on tamarind xyloglucan and longer xyloglucan oligosaccharides. Has no activity toward shorter cellooligosaccharides (Glc3-6), as well as toward the xyloglucan-heptamer, birchwood xylan, wheat arabinoxylan, konjac glucomannan, ivory nut mannan, beta-glucan from barley, lichenan from Icelandic moss, starch, and spruce galactoglucomannan. Has unprecedented broad specificity on xyloglucan, cleaving any glycosidicbond in theb-glucan main chain, regardless of xylosyl substitutions. When incubated with a mixture of xyloglucan and cellulose, efficiently attacks the xyloglucan, whereas cellulose conversion is inhibited, suggesting that removal of hemicellulose may be the true function of this LPMO during biomass conversion. In Gibberella zeae (strain ATCC MYA-4620 / CBS 123657 / FGSC 9075 / NRRL 31084 / PH-1) (Wheat head blight fungus), this protein is AA9 family lytic polysaccharide monooxygenase A.